Here is a 255-residue protein sequence, read N- to C-terminus: Thiazole synthase (255 aa).

The active-site Schiff-base intermediate with DXP is the Lys96. 1-deoxy-D-xylulose 5-phosphate is bound by residues Gly157, 183–184 (AG), and 205–206 (NS).

The protein belongs to the ThiG family. In terms of assembly, homotetramer. Forms heterodimers with either ThiH or ThiS.

Its subcellular location is the cytoplasm. It carries out the reaction [ThiS sulfur-carrier protein]-C-terminal-Gly-aminoethanethioate + 2-iminoacetate + 1-deoxy-D-xylulose 5-phosphate = [ThiS sulfur-carrier protein]-C-terminal Gly-Gly + 2-[(2R,5Z)-2-carboxy-4-methylthiazol-5(2H)-ylidene]ethyl phosphate + 2 H2O + H(+). Its pathway is cofactor biosynthesis; thiamine diphosphate biosynthesis. In terms of biological role, catalyzes the rearrangement of 1-deoxy-D-xylulose 5-phosphate (DXP) to produce the thiazole phosphate moiety of thiamine. Sulfur is provided by the thiocarboxylate moiety of the carrier protein ThiS. In vitro, sulfur can be provided by H(2)S. The polypeptide is Thiazole synthase (Staphylococcus carnosus (strain TM300)).